The primary structure comprises 521 residues: Lysine--tRNA ligase (521 aa).

The short motif at 32–40 (PSGTVHIGN) is the 'HIGH' region element. The 'KMSKS' region signature appears at 280-284 (KISSS).

It belongs to the class-I aminoacyl-tRNA synthetase family.

It localises to the cytoplasm. It catalyses the reaction tRNA(Lys) + L-lysine + ATP = L-lysyl-tRNA(Lys) + AMP + diphosphate. The protein is Lysine--tRNA ligase (lysS) of Borreliella burgdorferi (strain ATCC 35210 / DSM 4680 / CIP 102532 / B31) (Borrelia burgdorferi).